A 422-amino-acid polypeptide reads, in one-letter code: Serine--tRNA ligase (422 aa).

L-serine is bound at residue 231 to 233 (TGE). ATP is bound at residue 262–264 (RQE). Glutamate 285 serves as a coordination point for L-serine. ATP is bound at residue 349-352 (EISS). Serine 384 provides a ligand contact to L-serine.

Belongs to the class-II aminoacyl-tRNA synthetase family. Type-1 seryl-tRNA synthetase subfamily. Homodimer. The tRNA molecule binds across the dimer.

Its subcellular location is the cytoplasm. It catalyses the reaction tRNA(Ser) + L-serine + ATP = L-seryl-tRNA(Ser) + AMP + diphosphate + H(+). The enzyme catalyses tRNA(Sec) + L-serine + ATP = L-seryl-tRNA(Sec) + AMP + diphosphate + H(+). Its pathway is aminoacyl-tRNA biosynthesis; selenocysteinyl-tRNA(Sec) biosynthesis; L-seryl-tRNA(Sec) from L-serine and tRNA(Sec): step 1/1. Its function is as follows. Catalyzes the attachment of serine to tRNA(Ser). Is also able to aminoacylate tRNA(Sec) with serine, to form the misacylated tRNA L-seryl-tRNA(Sec), which will be further converted into selenocysteinyl-tRNA(Sec). This Mesoplasma florum (strain ATCC 33453 / NBRC 100688 / NCTC 11704 / L1) (Acholeplasma florum) protein is Serine--tRNA ligase.